The primary structure comprises 175 residues: Peptide deformylase (175 aa).

Fe cation-binding residues include cysteine 96 and histidine 138. Glutamate 139 is an active-site residue. Histidine 142 is a Fe cation binding site.

It belongs to the polypeptide deformylase family. Fe(2+) serves as cofactor.

It catalyses the reaction N-terminal N-formyl-L-methionyl-[peptide] + H2O = N-terminal L-methionyl-[peptide] + formate. Removes the formyl group from the N-terminal Met of newly synthesized proteins. Requires at least a dipeptide for an efficient rate of reaction. N-terminal L-methionine is a prerequisite for activity but the enzyme has broad specificity at other positions. This Campylobacter jejuni subsp. jejuni serotype O:2 (strain ATCC 700819 / NCTC 11168) protein is Peptide deformylase.